The sequence spans 465 residues: MLKIYDTLTRSRREFIPLTPGEVRMYVCGMTVYDYCHLGHARVLVVFDSVVRWLQTLGYKVIYVRNITDVDDKIIRRALENHEPFSALTARYIQAMEEDAMALGVISPSFEPRATEYVDSMIAMIESLLNRELAYVASNGDVFYDVRRFPGYGKLSGKSLDDLRAGERVEIDTNKRDPLDFVLWKAAKPDEPSWDSPWGKGRPGWHIECSAMSEHYLGDQFDIHGGGQDLQFPHHENEIAQSEGVHGHSHVNYWMHNGFVRVDNEKMSKSLGNFFTVREVLTRYQPEVVRFFIVRAHYRSPLNYSDAHLNDARSALERLYTVLKNHAPSQDSEVATAVIDWENNVYARRFMSAMNDDFNTPEAVAVLFDLASEANRTGDSHYASLLKALGGVLGLLQQPPQQYLQYPAHLQDGQYSVEEIENMIQQRLQARKERNFAQADTLRQQLAEAGIILEDSPQGTTWRRE.

A Zn(2+)-binding site is contributed by cysteine 28. Residues 30-40 (MTVYDYCHLGH) carry the 'HIGH' region motif. Residues cysteine 209, histidine 234, and glutamate 238 each coordinate Zn(2+). A 'KMSKS' region motif is present at residues 266 to 270 (KMSKS). Lysine 269 lines the ATP pocket.

The protein belongs to the class-I aminoacyl-tRNA synthetase family. As to quaternary structure, monomer. Zn(2+) is required as a cofactor.

Its subcellular location is the cytoplasm. The enzyme catalyses tRNA(Cys) + L-cysteine + ATP = L-cysteinyl-tRNA(Cys) + AMP + diphosphate. The polypeptide is Cysteine--tRNA ligase (Nitrosomonas europaea (strain ATCC 19718 / CIP 103999 / KCTC 2705 / NBRC 14298)).